The primary structure comprises 722 residues: Polyribonucleotide nucleotidyltransferase (722 aa).

Mg(2+) contacts are provided by aspartate 487 and aspartate 493. Residues 554–613 (PRIETFKIPTDKIREVIGTGGKVIREIVEKTGAKVNIEDDGTVKVASSDGESIKAAIKWI) enclose the KH domain. Positions 623–691 (GEIYEGTVVK…DRGKTRLSMK (69 aa)) constitute an S1 motif domain. Positions 697 to 722 (TGEDLEAKQKAEAKAEGEAPAQAAGE) are disordered. The segment covering 701 to 713 (LEAKQKAEAKAEG) has biased composition (basic and acidic residues).

This sequence belongs to the polyribonucleotide nucleotidyltransferase family. Mg(2+) is required as a cofactor.

It is found in the cytoplasm. It carries out the reaction RNA(n+1) + phosphate = RNA(n) + a ribonucleoside 5'-diphosphate. Its function is as follows. Involved in mRNA degradation. Catalyzes the phosphorolysis of single-stranded polyribonucleotides processively in the 3'- to 5'-direction. This is Polyribonucleotide nucleotidyltransferase from Rhodopseudomonas palustris (strain TIE-1).